The primary structure comprises 320 residues: UDP-3-O-acyl-N-acetylglucosamine deacetylase (320 aa).

Positions 92, 251, and 255 each coordinate Zn(2+). H278 functions as the Proton donor in the catalytic mechanism.

It belongs to the LpxC family. It depends on Zn(2+) as a cofactor.

It catalyses the reaction a UDP-3-O-[(3R)-3-hydroxyacyl]-N-acetyl-alpha-D-glucosamine + H2O = a UDP-3-O-[(3R)-3-hydroxyacyl]-alpha-D-glucosamine + acetate. It participates in glycolipid biosynthesis; lipid IV(A) biosynthesis; lipid IV(A) from (3R)-3-hydroxytetradecanoyl-[acyl-carrier-protein] and UDP-N-acetyl-alpha-D-glucosamine: step 2/6. In terms of biological role, catalyzes the hydrolysis of UDP-3-O-myristoyl-N-acetylglucosamine to form UDP-3-O-myristoylglucosamine and acetate, the committed step in lipid A biosynthesis. This is UDP-3-O-acyl-N-acetylglucosamine deacetylase from Psychrobacter arcticus (strain DSM 17307 / VKM B-2377 / 273-4).